We begin with the raw amino-acid sequence, 269 residues long: Tropinone reductase homolog At2g29320 (269 aa).

19 to 43 (LVTGAASGIGYAIVEELAGFGAKIH) contacts NADP(+). Ser-152 serves as a coordination point for substrate. Tyr-166 functions as the Proton acceptor in the catalytic mechanism.

This sequence belongs to the short-chain dehydrogenases/reductases (SDR) family. SDR65C subfamily.

This Arabidopsis thaliana (Mouse-ear cress) protein is Tropinone reductase homolog At2g29320.